The sequence spans 159 residues: MAGRPLPGGGGVCAAAYPNTSAGFPPHLQAGAMRRRFWGVFNCLCAGAFGALAAASAKLAFGREVNVGFCVLGIIMMATTNSLMWTFFSRGLSLSMSSAIASVTVTFSNILNSAFLGFVLYGECQEVLWWGGVFLILCGLTLIHRELPPPRKPLPHKQR.

A run of 4 helical transmembrane segments spans residues 37–57 (FWGV…AASA), 68–88 (GFCV…WTFF), 100–120 (IASV…GFVL), and 124–144 (CQEV…TLIH).

It localises to the membrane. In Bos taurus (Bovine), this protein is Transmembrane protein 42 (TMEM42).